A 346-amino-acid polypeptide reads, in one-letter code: uncharacterized protein (346 aa).

This is an uncharacterized protein from Borreliella burgdorferi (strain ATCC 35210 / DSM 4680 / CIP 102532 / B31) (Borrelia burgdorferi).